The chain runs to 448 residues: uncharacterized protein (448 aa).

Residue Lys-297 is modified to N6-(pyridoxal phosphate)lysine.

Belongs to the class-III pyridoxal-phosphate-dependent aminotransferase family. It depends on pyridoxal 5'-phosphate as a cofactor.

This is an uncharacterized protein from Sinorhizobium fredii (strain NBRC 101917 / NGR234).